The chain runs to 189 residues: Threonylcarbamoyl-AMP synthase (189 aa).

Positions 6 to 189 constitute a YrdC-like domain; that stretch reads TAIFTPIIDA…VLTGEQIRQG (184 aa).

Belongs to the SUA5 family. TsaC subfamily.

The protein localises to the cytoplasm. The enzyme catalyses L-threonine + hydrogencarbonate + ATP = L-threonylcarbamoyladenylate + diphosphate + H2O. Functionally, required for the formation of a threonylcarbamoyl group on adenosine at position 37 (t(6)A37) in tRNAs that read codons beginning with adenine. Catalyzes the conversion of L-threonine, HCO(3)(-)/CO(2) and ATP to give threonylcarbamoyl-AMP (TC-AMP) as the acyladenylate intermediate, with the release of diphosphate. In Serratia proteamaculans (strain 568), this protein is Threonylcarbamoyl-AMP synthase.